The primary structure comprises 297 residues: Internalin C (297 aa).

The first 34 residues, 1–34, serve as a signal peptide directing secretion; that stretch reads MLKKNNWLQNAVIAMLVLIVGLCINMGSGTKVQA. 6 LRR repeats span residues 74-96, 97-120, 122-139, 140-161, 162-184, and 186-207; these read LSGVQNFNGDNSNIQSLAGMQFF, TNLKELHLSHNQISDLSPLKDLTK, EELSVNRNRLKNLNGIPS, ACLSRLFLDNNELRDTDSLIHL, KNLEILSIRNNKLKSIVMLGFLS, and LEVLDLHGNEITNTGGLTRLKK.

Belongs to the internalin family. As to quaternary structure, interacts in vitro with human intestinal mucin-2 (MUC2) but not with mucin-1; binding is slightly better at pH 5.5, (the pH of the intestine) than at pH 7.4. Interacts with the SH3 6 domain of human DNMBP (Tuba). Interacts with I-kappa-B kinase alpha (IKKA, CHUK).

The protein resides in the secreted. The protein localises to the host cytoplasm. Its function is as follows. A virulence enhancer that has at least 2 dissociable functions in infection; it impairs translocation of host transcription factor NF-kappa-B to the nucleus and antagonizes the function of the Tuba dynamin-binding protein, promoting bacterial spreading. Perturbs the morphology of host cell junctions by impairing host DNMBP (Tuba) and WASL interaction, altering cortical tension at the cell junctions and allowing bacteria to more efficiently form bacteria-filled cell protrusions which promote bacterial spreading within infected host tissue. Down-regulates the host inflammation response usually induced by Listeria infection. Interacts with host I-kappa-B kinase alpha (IKKA, CHUK), which prevents IKKA from phosphorylating NF-kappa-B inhibitor alpha (IKBA, NFKBIA) and thus delays degradation of phospho-IKBA. Translocation of host transcription factor p65 (a subunit of NF-kappa-B, RELA) into the nucleus is impaired, which prevents activation of NF-KB-regulated genes. Recognized by serum from healthy humans exposed to L.monocytogenes as well from patients who have recovered from listeriosis. The sequence is that of Internalin C from Listeria monocytogenes serotype 1/2a (strain EGD / Mackaness).